Here is a 195-residue protein sequence, read N- to C-terminus: MARCKS-related protein (195 aa).

The segment at Met1–Glu195 is disordered. Gly2 is lipidated: N-myristoyl glycine. Residue Thr14 is modified to Phosphothreonine. Low complexity predominate over residues Glu16–Ala26. 4 positions are modified to phosphoserine: Ser22, Ser36, Ser41, and Ser48. Residues Gly53–Ala64 show a composition bias toward low complexity. Ser71 carries the post-translational modification Phosphoserine. The span at Ala76–Thr85 shows a compositional bias: basic and acidic residues. A Phosphothreonine modification is found at Thr85. A compositionally biased stretch (basic residues) spans Pro86–Phe98. Positions Lys87–Lys110 are effector domain involved in lipid-binding and calmodulin-binding. Phosphoserine is present on residues Ser93, Ser101, Ser104, Ser119, Ser120, and Ser135. Thr148 is subject to Phosphothreonine. Phosphoserine occurs at positions 151, 162, and 165. Residues Glu153–Glu195 show a composition bias toward low complexity. Phosphothreonine occurs at positions 178 and 187.

It belongs to the MARCKS family. In terms of assembly, binds to filamentous actin (F-actin), but not to monomeric G-actin, independently of its phosphorylation status. In terms of processing, phosphorylated. Phosphorylation at Ser-120 and Thr-178 is non-redundantly catalyzed by MAPK8 in vivo. Phosphorylation at Thr-148 is preferentially catalyzed by MAPK8 in vivo, but this modification can also be catalyzed by other kinases in the absence of MAPK8. May be phosphorylated by protein kinase C, which disrupts the interaction with calmodulin.

The protein resides in the cytoplasm. It localises to the cytoskeleton. It is found in the cell membrane. In terms of biological role, controls cell movement by regulating actin cytoskeleton homeostasis and filopodium and lamellipodium formation. When unphosphorylated, induces cell migration. When phosphorylated by MAPK8, induces actin bundles formation and stabilization, thereby reducing actin plasticity, hence restricting cell movement, including neuronal migration. May be involved in coupling the protein kinase C and calmodulin signal transduction systems. This chain is MARCKS-related protein (MARCKSL1), found in Homo sapiens (Human).